Here is a 451-residue protein sequence, read N- to C-terminus: Glucose-6-phosphate isomerase (451 aa).

Thr-38 is subject to Phosphothreonine. The Proton donor role is filled by Glu-290. Catalysis depends on residues His-311 and Lys-425.

Belongs to the GPI family.

It is found in the cytoplasm. It carries out the reaction alpha-D-glucose 6-phosphate = beta-D-fructose 6-phosphate. The protein operates within carbohydrate biosynthesis; gluconeogenesis. It participates in carbohydrate degradation; glycolysis; D-glyceraldehyde 3-phosphate and glycerone phosphate from D-glucose: step 2/4. Functionally, catalyzes the reversible isomerization of glucose-6-phosphate to fructose-6-phosphate. This chain is Glucose-6-phosphate isomerase, found in Shouchella clausii (strain KSM-K16) (Alkalihalobacillus clausii).